Here is a 494-residue protein sequence, read N- to C-terminus: MSAIMFVGTASNSGKSFLAAVTCAYLRQRGVDVAPFKSQNMSLNSCVAKENGEIAVAQAFQAAMAGQEPSIHHNPVLLKPKGELRSEVIVHGKPIGTMSYREYREIVFEDPWQAVLESAEILSEEHEVIVAEGAGSPAEINVLDTDIANLRVAEALGADVILVADISRGGAFAAVYGTIELLPERWRRLIKGFLFNKFLGDESLLEPGIKELERRLGVRYLGTVRHVGDFWMPWEDSEALDTHSPGRGSVRIAVIRLPRISNFTDFEPLAMEPDVRVEFVDPRDNLPEDADAVILPGTRTTISDLEELRKRGMDEEVVQAADEGTVVLGVCGGYQMLGRELVDESGGELDPGESVPGLGLLDAVTVFPSDAGKVTVRSEGVVNHPHLRGIRVEGFEIHEGRTYTDEPHLVRLRSGYGNRGCFLDGAYRTDRPVLGTYLHGIFFNRRFRHEFLRWVSGGRWKPPERDVVREAVKRNLQVALEIVESTDLPELLGE.

Residues 249 to 447 (SVRIAVIRLP…LHGIFFNRRF (199 aa)) form the GATase cobBQ-type domain. Cys-331 (nucleophile) is an active-site residue. The active site involves His-439.

The protein belongs to the CobB/CobQ family. CobQ subfamily.

It functions in the pathway cofactor biosynthesis; adenosylcobalamin biosynthesis. Its function is as follows. Catalyzes amidations at positions B, D, E, and G on adenosylcobyrinic A,C-diamide. NH(2) groups are provided by glutamine, and one molecule of ATP is hydrogenolyzed for each amidation. The sequence is that of Probable cobyric acid synthase from Methanopyrus kandleri (strain AV19 / DSM 6324 / JCM 9639 / NBRC 100938).